The chain runs to 274 residues: 3-methyl-2-oxobutanoate hydroxymethyltransferase (274 aa).

The Mg(2+) site is built by Asp-49 and Asp-88. 3-methyl-2-oxobutanoate is bound by residues 49–50 (DS), Asp-88, and Lys-118. Glu-120 is a Mg(2+) binding site. Glu-187 serves as the catalytic Proton acceptor.

The protein belongs to the PanB family. Homodecamer; pentamer of dimers. Requires Mg(2+) as cofactor.

It is found in the cytoplasm. It catalyses the reaction 3-methyl-2-oxobutanoate + (6R)-5,10-methylene-5,6,7,8-tetrahydrofolate + H2O = 2-dehydropantoate + (6S)-5,6,7,8-tetrahydrofolate. Its pathway is cofactor biosynthesis; (R)-pantothenate biosynthesis; (R)-pantoate from 3-methyl-2-oxobutanoate: step 1/2. Its function is as follows. Catalyzes the reversible reaction in which hydroxymethyl group from 5,10-methylenetetrahydrofolate is transferred onto alpha-ketoisovalerate to form ketopantoate. This Nitrobacter winogradskyi (strain ATCC 25391 / DSM 10237 / CIP 104748 / NCIMB 11846 / Nb-255) protein is 3-methyl-2-oxobutanoate hydroxymethyltransferase.